We begin with the raw amino-acid sequence, 1321 residues long: C-Jun-amino-terminal kinase-interacting protein 4 (1321 aa).

An N-acetylmethionine modification is found at Met1. Residues 7–95 (VVYQEEPGGS…ITQYEREKAL (89 aa)) enclose the RH1 domain. The stretch at 66-166 (AQDQEHQVEL…NALHQRHTEM (101 aa)) forms a coiled coil. A phosphoserine mark is found at Ser109, Ser183, Ser185, Ser194, and Ser203. A disordered region spans residues 203–292 (SLGIFPLPAG…SDVATIPTDT (90 aa)). A Phosphothreonine modification is found at Thr217. Over residues 236-253 (ELSQPRSHTSLKVSNSPE) the composition is skewed to polar residues. Ser238, Ser251, Ser265, Ser268, and Ser272 each carry phosphoserine. Polar residues predominate over residues 266 to 285 (DVSQGGSKATTPASTANSDV). Position 292 is a phosphothreonine (Thr292). 4 positions are modified to phosphoserine: Ser311, Ser329, Ser332, and Ser347. 3 positions are modified to phosphothreonine: Thr348, Thr365, and Thr418. The stretch at 408-534 (REVENLILEN…LQEAVRWTEM (127 aa)) forms a coiled coil. A compositionally biased stretch (basic and acidic residues) spans 473-489 (LRKARAEAEDARQKAKD). 2 disordered regions span residues 473–500 (LRKA…TAQR) and 563–600 (SSNT…SQLP). Residues 500-571 (RKRFTRVEMA…SSSNTTKKPE (72 aa)) enclose the RH2 domain. The residue at position 586 (Thr586) is a Phosphothreonine. Ser588 is subject to Phosphoserine. Thr595 bears the Phosphothreonine mark. A phosphoserine mark is found at Ser705, Ser728, Ser730, Ser732, and Ser733. The stretch at 724–758 (SKQRSASQSSLDKLDQELKEQQKELKNQEELSSLV) forms a coiled coil. Residues 854–906 (GAATSPSTNGASPVMDKPPEMEAENSEVDENVPTAEEATEATEGNAGSAEDTV) form a disordered region. The span at 855–864 (AATSPSTNGA) shows a compositional bias: polar residues. Residues 874-883 (MEAENSEVDE) show a composition bias toward acidic residues. Over residues 894–903 (ATEGNAGSAE) the composition is skewed to low complexity. Ser1188 carries the phosphoserine modification. The disordered stretch occupies residues 1239-1266 (PQSSSSGTDLTGDKAGPSAQEPGSQTPL). Phosphothreonine is present on Thr1264.

The protein belongs to the JIP scaffold family. As to quaternary structure, homodimer. The homodimer interacts with ARF6, forming a heterotetramer. Homooligomer. Interacts with MAX, MAPK14, MAP3K3, MYC, KNS2 and MAP2K4. Interaction with KNS2 is important in the formation of ternary complex with MAPK8. Interacts with NFKB1. Interacts with PIP4P1. Interacts with PIKFYVE. Interacts with MAPK8, MAPK9, MAPK10. Phosphorylated by MAPK8 and MAPK14. Expressed only in testis on the round spermatids of stage I, II and II. Absent in spermatogonia and spermatocyte. As to expression, expressed in testis and in acute myeloid leukemia (AML) patients. In terms of tissue distribution, expressed in testis.

It is found in the cytoplasm. It localises to the perinuclear region. The protein localises to the lysosome membrane. The protein resides in the cytoplasmic vesicle. Its subcellular location is the secretory vesicle. It is found in the acrosome. May play a role in spermatozoa-egg-interaction. Functionally, the JNK-interacting protein (JIP) group of scaffold proteins selectively mediates JNK signaling by aggregating specific components of the MAPK cascade to form a functional JNK signaling module. Regulates lysosomal positioning by acting as an adapter protein which links PIP4P1-positive lysosomes to the dynein-dynactin complex. Assists PIKFYVE selective functionality in microtubule-based endosome-to-TGN trafficking. The polypeptide is C-Jun-amino-terminal kinase-interacting protein 4 (Homo sapiens (Human)).